Reading from the N-terminus, the 483-residue chain is Aspartyl/glutamyl-tRNA(Asn/Gln) amidotransferase subunit B (483 aa).

The protein belongs to the GatB/GatE family. GatB subfamily. As to quaternary structure, heterotrimer of A, B and C subunits.

It catalyses the reaction L-glutamyl-tRNA(Gln) + L-glutamine + ATP + H2O = L-glutaminyl-tRNA(Gln) + L-glutamate + ADP + phosphate + H(+). It carries out the reaction L-aspartyl-tRNA(Asn) + L-glutamine + ATP + H2O = L-asparaginyl-tRNA(Asn) + L-glutamate + ADP + phosphate + 2 H(+). Functionally, allows the formation of correctly charged Asn-tRNA(Asn) or Gln-tRNA(Gln) through the transamidation of misacylated Asp-tRNA(Asn) or Glu-tRNA(Gln) in organisms which lack either or both of asparaginyl-tRNA or glutaminyl-tRNA synthetases. The reaction takes place in the presence of glutamine and ATP through an activated phospho-Asp-tRNA(Asn) or phospho-Glu-tRNA(Gln). The chain is Aspartyl/glutamyl-tRNA(Asn/Gln) amidotransferase subunit B from Herpetosiphon aurantiacus (strain ATCC 23779 / DSM 785 / 114-95).